We begin with the raw amino-acid sequence, 407 residues long: tRNA-specific 2-thiouridylase MnmA (407 aa).

ATP is bound by residues 20-27 (AMSGGVDS) and L46. C114 serves as the catalytic Nucleophile. The cysteines at positions 114 and 210 are disulfide-linked. ATP is bound at residue G138. An interaction with tRNA region spans residues 160 to 162 (RDQ). The active-site Cysteine persulfide intermediate is C210.

The protein belongs to the MnmA/TRMU family.

It localises to the cytoplasm. It catalyses the reaction S-sulfanyl-L-cysteinyl-[protein] + uridine(34) in tRNA + AH2 + ATP = 2-thiouridine(34) in tRNA + L-cysteinyl-[protein] + A + AMP + diphosphate + H(+). Its function is as follows. Catalyzes the 2-thiolation of uridine at the wobble position (U34) of tRNA, leading to the formation of s(2)U34. This chain is tRNA-specific 2-thiouridylase MnmA, found in Bartonella tribocorum (strain CIP 105476 / IBS 506).